The sequence spans 72 residues: uncharacterized protein (72 aa).

The segment at 15–62 is disordered; the sequence is NNNYNNNNNNNNNNNNNNNNNNNNNNNNNNININNNNNNNNNNNNNNN.

This is an uncharacterized protein from Dictyostelium discoideum (Social amoeba).